We begin with the raw amino-acid sequence, 655 residues long: Forkhead box protein O1 (655 aa).

2 disordered regions span residues 1 to 63 (MAEA…SASA) and 116 to 158 (GCLH…SRRN). The residue at position 24 (T24) is a Phosphothreonine; by PKB/AKT1 or PKB/AKT2 and SGK1. Over residues 33 to 63 (SQSNSATSSPAPSGSAAANPDAAAGLPSASA) the composition is skewed to low complexity. Residues 120-141 (PAPPQPPPPGPLSQHPPVPPAA) show a composition bias toward pro residues. Positions 159–235 (AWGNLSYADL…VQNEGTGKSS (77 aa)) form a DNA-binding region, fork-head. 2 DNA-binding regions span residues 211 to 218 (NSIRHNLS) and 234 to 237 (SSWW). 4 positions are modified to phosphoserine; by STK4/MST1: S212, S218, S234, and S235. The tract at residues 234–344 (SSWWMLNPEG…QDDLGEGDVH (111 aa)) is disordered. N6-acetyllysine is present on residues K245 and K248. The residue at position 249 (S249) is a Phosphoserine; by CDK1. An omega-N-methylarginine; by PRMT1 mark is found at R251 and R253. The Nuclear localization signal motif lies at 251–253 (RRR). A Phosphoserine; by PKB/AKT1 and SGK1 modification is found at S256. N6-acetyllysine is present on residues K262, K265, and K274. The segment covering 264–275 (AKSRSRAAKKKA) has biased composition (basic residues). Residues 283–563 (GAGDSPGSQF…RLTQVKTPVQ (281 aa)) form a sufficient for interaction with NLK region. Phosphoserine occurs at positions 287 and 298. Residues 309 to 326 (NWSTFRPRTSSNASTISG) show a composition bias toward polar residues. S319 is subject to Phosphoserine; by PKB/AKT1. Position 322 is a phosphoserine; by CK1 and SGK1 (S322). A Phosphoserine; by CK1 modification is found at S325. Residue S329 is modified to Phosphoserine; by DYRK1A. Position 333 is a phosphothreonine (T333). Residues 363-459 (SEISNPENME…GGMSQYNCAP (97 aa)) are required for interaction with RUNX2. Position 423 is an N6-acetyllysine (K423). Positions 462 to 466 (LKELL) match the Required for interaction with SIRT1 motif. A compositionally biased stretch (polar residues) spans 507 to 534 (YGSQASHNKMMNPSSHTHPGHAQQTSAV). The interval 507 to 537 (YGSQASHNKMMNPSSHTHPGHAQQTSAVNGR) is disordered.

As to quaternary structure, interacts with LRPPRC. Interacts with RUNX2; the interaction inhibits RUNX2 transcriptional activity and mediates the IGF1/insulin-dependent BGLAP expression in osteoblasts Interacts with PPP2R1A; the interaction regulates the dephosphorylation of FOXO1 at Thr-24 and Ser-256 leading to its nuclear import. Interacts (acetylated form) with PPARG. Interacts with XBP1 isoform 2; this interaction is direct and leads to FOXO1 ubiquitination and degradation via the proteasome pathway. Interacts with NLK. Interacts with SIRT1; the interaction results in the deacetylation of FOXO1 leading to activation of FOXO1-mediated transcription of genes involved in DNA repair and stress resistance. Binds to CDK1. Interacts with the 14-3-3 proteins, YWHAG and YWHAZ; the interactions require insulin-stimulated phosphorylation on Thr-24, promote nuclear exit and loss of transcriptional activity. Interacts with SKP2; the interaction ubiquitinates FOXO1 leading to its proteasomal degradation. The interaction requires the presence of KRIT1. Interacts (via the C-terminal half) with ATF4 (via its DNA-binding domain); the interaction occurs in osteoblasts, regulates glucose homeostasis via suppression of beta-cell proliferation and subsequent decrease in insulin production. Interacts with PRMT1; the interaction methylates FOXO1, prevents PKB/AKT1 phosphorylation and retains FOXO1 in the nucleus. Interacts with EP300 and CREBBP; the interactions acetylate FOXO1. Interacts with SIRT2; the interaction is disrupted in response to oxidative stress or serum deprivation, leading to increased level of acetylated FOXO1, which promotes stress-induced autophagy by stimulating E1-like activating enzyme ATG7. Interacts (acetylated form) with ATG7; the interaction is increased in response to oxidative stress or serum deprivation and promotes the autophagic process leading to cell death. Interacts (via the Fork-head domain) with CEBPA; the interaction increases when FOXO1 is deacetylated. Interacts with WDFY2. Forms a complex with WDFY2 and AKT1. Interacts with CRY1. Interacts with PPIA/CYPA; the interaction promotes FOXO1 dephosphorylation, nuclear accumulation and transcriptional activity. Interacts with TOX4; FOXO1 is required for full induction of TOX4-dependent activity and the interaction is inhibited by insulin. Interacts (when phosphorylated on Ser-256) with STUB1/CHIP. In terms of processing, phosphorylation by NLK promotes nuclear export and inhibits the transcriptional activity. In response to growth factors, phosphorylation on Thr-24, Ser-256 and Ser-322 by PKB/AKT1 promotes nuclear export and inactivation of transactivational activity. Phosphorylation on Thr-24 is required for binding 14-3-3 proteins. Phosphorylation of Ser-256 decreases DNA-binding activity and promotes the phosphorylation of Thr-24 and Ser-319, permitting phosphorylation of Ser-322 and Ser-325, probably by CDK1, leading to nuclear exclusion and loss of function. Stress signals, such as response to oxygen or nitric oxide, attenuate the PKB/AKT1-mediated phosphorylation leading to nuclear retention. Phosphorylation of Ser-329 is independent of IGF1 and leads to reduced function. Dephosphorylated on Thr-24 and Ser-256 by PP2A in beta-cells under oxidative stress leading to nuclear retention. Phosphorylation of Ser-249 by CDK1 disrupts binding of 14-3-3 proteins leading to nuclear accumulation and has no effect on DNA-binding nor transcriptional activity. Phosphorylation by STK4/MST1 on Ser-212, upon oxidative stress, inhibits binding to 14-3-3 proteins and nuclear export. PPIA/CYPA promotes its dephosphorylation on Ser-256. Ubiquitinated by SKP2. Ubiquitination leads to proteasomal degradation. Ubiquitinated by STUB1/CHIP; when Ser-256 is phosphorylated. Post-translationally, methylation inhibits AKT1-mediated phosphorylation at Ser-256 and is increased by oxidative stress. In terms of processing, acetylated. Acetylation at Lys-262, Lys-265 and Lys-274 are necessary for autophagic cell death induction. Deacetylated by SIRT2 in response to oxidative stress or serum deprivation, thereby negatively regulating FOXO1-mediated autophagic cell death. Once in the nucleus, acetylated by CREBBP/EP300. Acetylation diminishes the interaction with target DNA and attenuates the transcriptional activity. It increases the phosphorylation at Ser-256. Deacetylation by SIRT1 results in reactivation of the transcriptional activity. Oxidative stress by hydrogen peroxide treatment appears to promote deacetylation and uncoupling of insulin-induced phosphorylation. By contrast, resveratrol acts independently of acetylation. Acetylated at Lys-423, promoting its localization to the nucleus and transcription factor activity. Deacetylation at Lys-423 by SIRT6, promotes its translocation into the cytoplasm, preventing its transcription factor activity. Deacetylation and subsequent inhibition by SIRT6 has different effects depending on cell types: it inhibits gluconeogenesis in hepatocytes, promotes glucose sensing in pancreatic beta-cells and regulates lipid catabolism in brown adipocytes. Expressed in umbilical endothelial cells (at protein level). Abundantly expressed in skeletal muscle and ovary, with lower expression in the heart, placenta, lung, liver, pancreas, spleen, testis and small intestine. Weakly expressed in the brain, thymus, prostate and mucosal lining of the colon.

It localises to the cytoplasm. The protein localises to the nucleus. Transcription factor that is the main target of insulin signaling and regulates metabolic homeostasis in response to oxidative stress. Binds to the insulin response element (IRE) with consensus sequence 5'-TT[G/A]TTTTG-3' and the related Daf-16 family binding element (DBE) with consensus sequence 5'-TT[G/A]TTTAC-3'. Activity suppressed by insulin. Main regulator of redox balance and osteoblast numbers and controls bone mass. Orchestrates the endocrine function of the skeleton in regulating glucose metabolism. Also acts as a key regulator of chondrogenic commitment of skeletal progenitor cells in response to lipid availability: when lipids levels are low, translocates to the nucleus and promotes expression of SOX9, which induces chondrogenic commitment and suppresses fatty acid oxidation. Acts synergistically with ATF4 to suppress osteocalcin/BGLAP activity, increasing glucose levels and triggering glucose intolerance and insulin insensitivity. Also suppresses the transcriptional activity of RUNX2, an upstream activator of osteocalcin/BGLAP. Acts as an inhibitor of glucose sensing in pancreatic beta cells by acting as a transcription repressor and suppressing expression of PDX1. In hepatocytes, promotes gluconeogenesis by acting together with PPARGC1A and CEBPA to activate the expression of genes such as IGFBP1, G6PC1 and PCK1. Also promotes gluconeogenesis by directly promoting expression of PPARGC1A and G6PC1. Important regulator of cell death acting downstream of CDK1, PKB/AKT1 and STK4/MST1. Promotes neural cell death. Mediates insulin action on adipose tissue. Regulates the expression of adipogenic genes such as PPARG during preadipocyte differentiation and, adipocyte size and adipose tissue-specific gene expression in response to excessive calorie intake. Regulates the transcriptional activity of GADD45A and repair of nitric oxide-damaged DNA in beta-cells. Required for the autophagic cell death induction in response to starvation or oxidative stress in a transcription-independent manner. Mediates the function of MLIP in cardiomyocytes hypertrophy and cardiac remodeling. Positive regulator of apoptosis in cardiac smooth muscle cells as a result of its transcriptional activation of pro-apoptotic genes. Regulates endothelial cell (EC) viability and apoptosis in a PPIA/CYPA-dependent manner via transcription of CCL2 and BCL2L11 which are involved in EC chemotaxis and apoptosis. The sequence is that of Forkhead box protein O1 from Homo sapiens (Human).